We begin with the raw amino-acid sequence, 543 residues long: Sodium-dependent lysophosphatidylcholine symporter 1 (543 aa).

Over residues 1–14 (MAKGEGAESGSAAG) the composition is skewed to low complexity. The segment at 1–34 (MAKGEGAESGSAAGLLPTSILQSTERPAQVKKEP) is disordered. Topologically, residues 1–40 (MAKGEGAESGSAAGLLPTSILQSTERPAQVKKEPKKKKQQ) are cytoplasmic. Residues 41–70 (LSVCNKLCYALGGAPYQVTGCALGFFLQIY) form a helical membrane-spanning segment. At 71-94 (LLDVAQKDEEVVFCFSSFQVGPFS) the chain is on the extracellular side. A helical transmembrane segment spans residues 95 to 115 (ASIILFVGRAWDAITDPLVGL). The Cytoplasmic portion of the chain corresponds to 116–127 (CISKSPWTCLGR). The chain crosses the membrane as a helical span at residues 128–147 (LMPWIIFSTPLAVIAYFLIW). The Extracellular segment spans residues 148 to 157 (FVPDFPHGQT). Residues 158–182 (YWYLLFYCLFETMVTCFHVPYSALT) form a helical membrane-spanning segment. At 183-189 (MFISTEQ) the chain is on the cytoplasmic side. A helical transmembrane segment spans residues 190–221 (TERDSATAYRMTVEVLGTVLGTAIQGQIVGQA). Residues 222–241 (DTPCFQDLNSSTVASQSANH) are Extracellular-facing. An intrachain disulfide couples C225 to C473. N-linked (GlcNAc...) asparagine glycans are attached at residues N230 and N240. The helical transmembrane segment at 242-275 (THGTTSHRETQKAYLLAAGVIVCIYIICAVILIL) threads the bilayer. Over 276-306 (GVREQREPYEAQQSEPIAYFRGLRLVMSHGP) the chain is Cytoplasmic. The helical transmembrane segment at 307-333 (YIKLITGFLFTSLAFMLVEGNFVLFCT) threads the bilayer. Residues 334–344 (YTLGFRNEFQN) are Extracellular-facing. A helical transmembrane segment spans residues 345-363 (LLLAIMLSATLTIPIWQWF). Residues 364 to 367 (LTRF) lie on the Cytoplasmic side of the membrane. Residues 368–389 (GKKTAVYVGISSAVPFLILVAL) traverse the membrane as a helical segment. The Extracellular portion of the chain corresponds to 390-392 (MES). The helical transmembrane segment at 393 to 429 (NLIITYAVAVAAGISVAAAFLLPWSMLPDVIDDFHLK) threads the bilayer. Residues 430–439 (QPHFHGTEPI) are Cytoplasmic-facing. A helical membrane pass occupies residues 440-466 (FFSFYVFFTKFASGVSLGISTLSLDFA). Residues 467-478 (GYQTRGCSQPER) lie on the Extracellular side of the membrane. A helical membrane pass occupies residues 479–502 (VKFTLNMLVTMAPIVLILLGLLLF). The Cytoplasmic portion of the chain corresponds to 503 to 543 (KMYPIDEERRRQNKKALQALRDEASSSGCSETDSTELASIL).

Belongs to the major facilitator superfamily. As to quaternary structure, interacts with ERVFRD-1/syncytin-2. In placenta, associated with trophoblast cells.

It is found in the cell membrane. It localises to the endoplasmic reticulum membrane. The catalysed reaction is a 1-acyl-sn-glycero-3-phosphocholine(in) + Na(+)(in) = a 1-acyl-sn-glycero-3-phosphocholine(out) + Na(+)(out). The enzyme catalyses 1-(4Z,7Z,10Z,13Z,16Z,19Z-docosahexaenoyl)-sn-glycero-3-phosphocholine(in) + Na(+)(in) = 1-(4Z,7Z,10Z,13Z,16Z,19Z-docosahexaenoyl)-sn-glycero-3-phosphocholine(out) + Na(+)(out). It carries out the reaction 1-(9Z-octadecenoyl)-sn-glycero-3-phosphocholine(in) + Na(+)(in) = 1-(9Z-octadecenoyl)-sn-glycero-3-phosphocholine(out) + Na(+)(out). It catalyses the reaction 1-hexadecanoyl-sn-glycero-3-phosphocholine(in) + Na(+)(in) = 1-hexadecanoyl-sn-glycero-3-phosphocholine(out) + Na(+)(out). The catalysed reaction is a 1-acyl-sn-glycero-3-phosphoethanolamine(in) + Na(+)(in) = a 1-acyl-sn-glycero-3-phosphoethanolamine(out) + Na(+)(out). In terms of biological role, sodium-dependent lysophosphatidylcholine (LPC) symporter, which plays an essential role for blood-brain barrier formation and function. Specifically expressed in endothelium of the blood-brain barrier of micro-vessels and transports LPC into the brain. Transport of LPC is essential because it constitutes the major mechanism by which docosahexaenoic acid (DHA), an omega-3 fatty acid that is essential for normal brain growth and cognitive function, enters the brain. Transports LPC carrying long-chain fatty acids such LPC oleate and LPC palmitate with a minimum acyl chain length of 14 carbons. Does not transport docosahexaenoic acid in unesterified fatty acid. Specifically required for blood-brain barrier formation and function, probably by mediating lipid transport. Not required for central nervous system vascular morphogenesis. Acts as a transporter for tunicamycin, an inhibitor of asparagine-linked glycosylation. In placenta, acts as a receptor for ERVFRD-1/syncytin-2 and is required for trophoblast fusion. The chain is Sodium-dependent lysophosphatidylcholine symporter 1 from Homo sapiens (Human).